Here is a 548-residue protein sequence, read N- to C-terminus: Druantia protein DruB (548 aa).

The protein localises to the cytoplasm. Functionally, component of antiviral defense system Druantia type I, composed of DruA, DruB, DruC, DruD and DruE. Expression of Druantia in E.coli (strain MG1655) confers resistance to phage lambda, SECphi18, SECphi27 and T4. This is Druantia protein DruB from Escherichia coli (strain UMEA 4076-1).